The primary structure comprises 247 residues: Capsid protein (247 aa).

The short motif at 3-20 is the Bipartite nuclear localization signal element; sequence KRDAPWRLMAGTSKVSRS. The short motif at 31-45 is the Nuclear localization signal element; it reads KRDAWVNRPMYRKPR. Residues 92–113 carry the Nuclear export signal motif; sequence ITHRVGKRFCVKSVYILGKIWM. The Bipartite nuclear localization signal signature appears at 191–238; that stretch reads RRFWKVNNNVVYNHQEAGKYENHTENALLLYMACTHASNPVYATLKIR.

Belongs to the geminiviridae capsid protein family. In terms of assembly, homomultimer. Binds to single-stranded and double-stranded viral DNA. Interacts (via nuclear localization signals) with host importin alpha-1a.

It localises to the virion. Its subcellular location is the host nucleus. In terms of biological role, encapsidates the viral DNA into characteristic twinned ('geminate') particles. Binds the genomic viral ssDNA and shuttles it into and out of the cell nucleus. The CP of bipartite geminiviruses is not required for cell-to-cell or systemic movement. This Solanum lycopersicum (Tomato) protein is Capsid protein.